A 334-amino-acid polypeptide reads, in one-letter code: Beta-ketoacyl-[acyl-carrier-protein] synthase III (334 aa).

Residues Cys114 and His253 contribute to the active site. An ACP-binding region spans residues 254-258 (QANIR). The active site involves Asn283.

It belongs to the thiolase-like superfamily. FabH family. As to quaternary structure, homodimer.

It is found in the cytoplasm. It carries out the reaction malonyl-[ACP] + acetyl-CoA + H(+) = 3-oxobutanoyl-[ACP] + CO2 + CoA. The protein operates within lipid metabolism; fatty acid biosynthesis. Functionally, catalyzes the condensation reaction of fatty acid synthesis by the addition to an acyl acceptor of two carbons from malonyl-ACP. Catalyzes the first condensation reaction which initiates fatty acid synthesis and may therefore play a role in governing the total rate of fatty acid production. Possesses both acetoacetyl-ACP synthase and acetyl transacylase activities. Its substrate specificity determines the biosynthesis of branched-chain and/or straight-chain of fatty acids. The polypeptide is Beta-ketoacyl-[acyl-carrier-protein] synthase III (Campylobacter curvus (strain 525.92)).